Here is an 883-residue protein sequence, read N- to C-terminus: Phosphoenolpyruvate carboxylase (883 aa).

Residues His138 and Lys546 contribute to the active site.

The protein belongs to the PEPCase type 1 family. The cofactor is Mg(2+).

It catalyses the reaction oxaloacetate + phosphate = phosphoenolpyruvate + hydrogencarbonate. Forms oxaloacetate, a four-carbon dicarboxylic acid source for the tricarboxylic acid cycle. The protein is Phosphoenolpyruvate carboxylase of Salmonella arizonae (strain ATCC BAA-731 / CDC346-86 / RSK2980).